A 424-amino-acid polypeptide reads, in one-letter code: Adenylosuccinate synthetase (424 aa).

GTP-binding positions include 12 to 18 (GDEGKGK) and 40 to 42 (GHT). Aspartate 13 serves as the catalytic Proton acceptor. The Mg(2+) site is built by aspartate 13 and glycine 40. IMP-binding positions include 13–16 (DEGK), 38–41 (NAGH), threonine 130, arginine 144, asparagine 220, threonine 235, and arginine 299. The active-site Proton donor is the histidine 41. 295–301 (VTTGRRR) contacts substrate. GTP-binding positions include arginine 301, 327–329 (KLD), and 412–414 (GTG).

The protein belongs to the adenylosuccinate synthetase family. As to quaternary structure, homodimer. It depends on Mg(2+) as a cofactor.

It localises to the cytoplasm. It catalyses the reaction IMP + L-aspartate + GTP = N(6)-(1,2-dicarboxyethyl)-AMP + GDP + phosphate + 2 H(+). Its pathway is purine metabolism; AMP biosynthesis via de novo pathway; AMP from IMP: step 1/2. Its function is as follows. Plays an important role in the de novo pathway and in the salvage pathway of purine nucleotide biosynthesis. Catalyzes the first committed step in the biosynthesis of AMP from IMP. The chain is Adenylosuccinate synthetase from Aspergillus fumigatus (strain CBS 144.89 / FGSC A1163 / CEA10) (Neosartorya fumigata).